Consider the following 161-residue polypeptide: Endoribonuclease YbeY (161 aa).

Zn(2+) contacts are provided by H121, H125, and H131.

The protein belongs to the endoribonuclease YbeY family. Zn(2+) is required as a cofactor.

The protein localises to the cytoplasm. Its function is as follows. Single strand-specific metallo-endoribonuclease involved in late-stage 70S ribosome quality control and in maturation of the 3' terminus of the 16S rRNA. The sequence is that of Endoribonuclease YbeY from Xanthomonas campestris pv. campestris (strain 8004).